A 180-amino-acid polypeptide reads, in one-letter code: MLIAITGTPGVGKTTIAKLLAEKLGYEYVNLRDFALEKGCGREVDGEVEVEIDELAYFVEKELKDRNVVLDGHLSHLMPVDLVVVLRAHPRIIGERLRERGYSKEKIGENVEAELVDAILIEAIDEHENVIEVDTTNKTPEEIVEEIIGLIKSGVKRRVGIVDWSEVYDEIIPYLRLGGE.

ATP contacts are provided by G10, G12, K13, T14, and T15. The interval 30–50 (NLRDFALEKGCGREVDGEVEV) is NMP. The LID stretch occupies residues 99–109 (ERGYSKEKIGE). ATP contacts are provided by R100 and K138.

It belongs to the adenylate kinase family. AK6 subfamily. Interacts with uS11. Not a structural component of 40S pre-ribosomes, but transiently interacts with them by binding to uS11.

It catalyses the reaction AMP + ATP = 2 ADP. The catalysed reaction is ATP + H2O = ADP + phosphate + H(+). Its function is as follows. Broad-specificity nucleoside monophosphate (NMP) kinase that catalyzes the reversible transfer of the terminal phosphate group between nucleoside triphosphates and monophosphates. Also has ATPase activity. Involved in the late maturation steps of the 30S ribosomal particles, specifically 16S rRNA maturation. While NMP activity is not required for ribosome maturation, ATPase activity is. Associates transiently with small ribosomal subunit protein uS11. ATP hydrolysis breaks the interaction with uS11. May temporarily remove uS11 from the ribosome to enable a conformational change of the ribosomal RNA that is needed for the final maturation step of the small ribosomal subunit. The polypeptide is Putative adenylate kinase (Pyrococcus abyssi (strain GE5 / Orsay)).